Reading from the N-terminus, the 674-residue chain is tRNA 5-methylaminomethyl-2-thiouridine biosynthesis bifunctional protein MnmC (674 aa).

Residues 1–246 (MFIMSSISHA…KREMIAGSLS (246 aa)) are tRNA (mnm(5)s(2)U34)-methyltransferase. Residues 272-674 (IGGGIASATL…RKGKALTQKV (403 aa)) form an FAD-dependent cmnm(5)s(2)U34 oxidoreductase region.

The protein in the N-terminal section; belongs to the methyltransferase superfamily. tRNA (mnm(5)s(2)U34)-methyltransferase family. It in the C-terminal section; belongs to the DAO family. The cofactor is FAD.

It is found in the cytoplasm. The enzyme catalyses 5-aminomethyl-2-thiouridine(34) in tRNA + S-adenosyl-L-methionine = 5-methylaminomethyl-2-thiouridine(34) in tRNA + S-adenosyl-L-homocysteine + H(+). In terms of biological role, catalyzes the last two steps in the biosynthesis of 5-methylaminomethyl-2-thiouridine (mnm(5)s(2)U) at the wobble position (U34) in tRNA. Catalyzes the FAD-dependent demodification of cmnm(5)s(2)U34 to nm(5)s(2)U34, followed by the transfer of a methyl group from S-adenosyl-L-methionine to nm(5)s(2)U34, to form mnm(5)s(2)U34. In Vibrio cholerae serotype O1 (strain ATCC 39315 / El Tor Inaba N16961), this protein is tRNA 5-methylaminomethyl-2-thiouridine biosynthesis bifunctional protein MnmC.